The sequence spans 322 residues: Protein-methionine-sulfoxide reductase catalytic subunit MsrP (322 aa).

The tat-type signal signal peptide spans 1–59; that stretch reads MSLRDALKTPSSEITDEAVYRDRRRLLQLFALTPALSVAGCAEADPPPPPKTVVTPAQA. Mo-molybdopterin contacts are provided by residues asparagine 79, 82-83, cysteine 137, threonine 172, asparagine 220, arginine 225, and 236-238; these read YE and SIK.

Belongs to the MsrP family. In terms of assembly, heterodimer of a catalytic subunit (MsrP) and a heme-binding subunit (MsrQ). Mo-molybdopterin serves as cofactor. Predicted to be exported by the Tat system. The position of the signal peptide cleavage has not been experimentally proven.

It localises to the periplasm. It carries out the reaction L-methionyl-[protein] + a quinone + H2O = L-methionyl-(S)-S-oxide-[protein] + a quinol. It catalyses the reaction L-methionyl-[protein] + a quinone + H2O = L-methionyl-(R)-S-oxide-[protein] + a quinol. In terms of biological role, part of the MsrPQ system that repairs oxidized periplasmic proteins containing methionine sulfoxide residues (Met-O), using respiratory chain electrons. Thus protects these proteins from oxidative-stress damage caused by reactive species of oxygen and chlorine generated by the host defense mechanisms. MsrPQ is essential for the maintenance of envelope integrity under bleach stress, rescuing a wide series of structurally unrelated periplasmic proteins from methionine oxidation. The catalytic subunit MsrP is non-stereospecific, being able to reduce both (R-) and (S-) diastereoisomers of methionine sulfoxide. The polypeptide is Protein-methionine-sulfoxide reductase catalytic subunit MsrP (Xanthomonas campestris pv. campestris (strain ATCC 33913 / DSM 3586 / NCPPB 528 / LMG 568 / P 25)).